Consider the following 591-residue polypeptide: V-type ATP synthase alpha chain (591 aa).

Gly233 to Thr240 contributes to the ATP binding site.

This sequence belongs to the ATPase alpha/beta chains family.

It carries out the reaction ATP + H2O + 4 H(+)(in) = ADP + phosphate + 5 H(+)(out). Produces ATP from ADP in the presence of a proton gradient across the membrane. The V-type alpha chain is a catalytic subunit. In Streptococcus pneumoniae (strain Hungary19A-6), this protein is V-type ATP synthase alpha chain.